We begin with the raw amino-acid sequence, 562 residues long: MYALKRELWCVLLLCGAICTSPSQETHRRLRRGVRSYRVTCRDEKTQMIYQQHQSWLRPLLRGNRVEHCWCNDGQTQCHSVPVKSCSEPRCFNGGTCLQAIYFSDFVCQCPVGFIGRQCEIDARATCYEDQGITYRGTWSTTESGAECVNWNTSGLASMPYNGRRPDAVKLGLGNHNYCRNPDKDSKPWCYIFKAEKYSPDFCSTPACTKEKEECYTGKGLDYRGTRSLTMSGAFCLPWNSLVLMGKIYTAWNSNAQTLGLGKHNYCRNPDGDTQPWCHVLKDHKLTWEYCDLPQCVTCGLRQYKEPQFRIKGGLYADITSHPWQAAIFVKNRRSPGERFLCGGILISSCWVLSAAHCFQERFPPHHVRVVLGRTYRLVPGEEEQAFEVEKYIVHKEFDDDTYDNDIALLQLKSDSLTCAQESDAVRTVCLPEANLQLPDWTECELSGYGKHEASSPFYSERLKEAHVRLYPSSRCTSKHLFNKTITNNMLCAGDTRSGGDNANLHDACQGDSGGPLVCMKGNHMTLVGVISWGLGCGQKDVPGVYTKVTNYLNWIRDNTRP.

The first 19 residues, 1–19 (MYALKRELWCVLLLCGAIC), serve as a signal peptide directing secretion. Residues 20–32 (TSPSQETHRRLRR) constitute a propeptide that is removed on maturation. Residues 33 to 35 (GVR) constitute a propeptide, removed by plasmin. Positions 39-81 (VTCRDEKTQMIYQQHQSWLRPLLRGNRVEHCWCNDGQTQCHSV) constitute a Fibronectin type-I domain. 17 disulfides stabilise this stretch: Cys-41–Cys-71, Cys-69–Cys-78, Cys-86–Cys-97, Cys-91–Cys-108, Cys-110–Cys-119, Cys-127–Cys-208, Cys-148–Cys-190, Cys-179–Cys-203, Cys-215–Cys-296, Cys-236–Cys-278, Cys-267–Cys-291, Cys-299–Cys-430, Cys-342–Cys-358, Cys-350–Cys-419, Cys-444–Cys-519, Cys-476–Cys-492, and Cys-509–Cys-537. An important for binding to annexin A2 region spans residues 42-52 (RDEKTQMIYQQ). In terms of domain architecture, EGF-like spans 82–120 (PVKSCSEPRCFNGGTCLQAIYFSDFVCQCPVGFIGRQCE). Residue Thr-96 is glycosylated (O-linked (Fuc) threonine). 2 Kringle domains span residues 126 to 208 (TCYE…TPAC) and 214 to 296 (ECYT…LPQC). Asn-152 carries N-linked (GlcNAc...) asparagine glycosylation. The Peptidase S1 domain maps to 311 to 561 (IKGGLYADIT…YLNWIRDNTR (251 aa)). Catalysis depends on charge relay system residues His-357 and Asp-406. N-linked (GlcNAc...) asparagine glycosylation occurs at Asn-483. Catalysis depends on Ser-513, which acts as the Charge relay system.

The protein belongs to the peptidase S1 family. In terms of assembly, heterodimer of chain A and chain B held by a disulfide bond. Binds to fibrin with high affinity. This interaction leads to an increase in the catalytic efficiency of the enzyme due to an increase in affinity for plasminogen. Similarly, binding to heparin increases the activation of plasminogen. Binds to annexin A2, cytokeratin-8, fibronectin and laminin. Binds to mannose receptor and the low-density lipoprotein receptor-related protein (LRP1); these proteins are involved in TPA clearance. Binds LRP1B; binding is followed by internalization and degradation. Forms heterodimer with SERPINA5. Interacts with SERPINE1. In complex with SERPINE1, interacts with SORL1. In terms of processing, the single chain, almost fully active enzyme, can be further processed into a two-chain fully active form by a cleavage after Arg-310 catalyzed by plasmin, tissue kallikrein or factor Xa.

It localises to the secreted. The protein resides in the extracellular space. The catalysed reaction is Specific cleavage of Arg-|-Val bond in plasminogen to form plasmin.. Inhibited by SERPINA5. Inhibited by SERPINE1. In terms of biological role, converts the abundant, but inactive, zymogen plasminogen to plasmin by hydrolyzing a single Arg-Val bond in plasminogen. By controlling plasmin-mediated proteolysis, it plays an important role in tissue remodeling and degradation, in cell migration and many other physiopathological events. During oocyte activation, plays a role in cortical granule reaction in the zona reaction, which contributes to the block to polyspermy. The protein is Tissue-type plasminogen activator (PLAT) of Sus scrofa (Pig).